Consider the following 150-residue polypeptide: UPF0208 membrane protein VIBHAR_02941 (150 aa).

2 consecutive transmembrane segments (helical) span residues 42–62 and 70–90; these read FGIK…MAFN and AIVV…WLGS.

Belongs to the UPF0208 family.

Its subcellular location is the cell inner membrane. The chain is UPF0208 membrane protein VIBHAR_02941 from Vibrio campbellii (strain ATCC BAA-1116).